The following is a 348-amino-acid chain: Protein RecA (348 aa).

71–78 (GVESSGKT) serves as a coordination point for ATP.

Belongs to the RecA family.

It localises to the cytoplasm. Can catalyze the hydrolysis of ATP in the presence of single-stranded DNA, the ATP-dependent uptake of single-stranded DNA by duplex DNA, and the ATP-dependent hybridization of homologous single-stranded DNAs. It interacts with LexA causing its activation and leading to its autocatalytic cleavage. This Aquifex pyrophilus protein is Protein RecA.